The chain runs to 144 residues: Large ribosomal subunit protein uL13 (144 aa).

It belongs to the universal ribosomal protein uL13 family. As to quaternary structure, part of the 50S ribosomal subunit.

In terms of biological role, this protein is one of the early assembly proteins of the 50S ribosomal subunit, although it is not seen to bind rRNA by itself. It is important during the early stages of 50S assembly. The polypeptide is Large ribosomal subunit protein uL13 (Buchnera aphidicola subsp. Baizongia pistaciae (strain Bp)).